The chain runs to 312 residues: Signal peptidase I (312 aa).

The chain crosses the membrane as a helical span at residues 7–27 (IFLLTSTFFTGILWIIDHILL). At 28–63 (IKNYFYNKKKTKNNNTILINKVILENKKCFFRSLSS) the chain is on the cytoplasmic side. The helical transmembrane segment at 64 to 84 (LFPTFFIVFIIRSFIYEPFQI) threads the bilayer. Residues 85–312 (PSGSMMPTLL…IRIKRIGNIY (228 aa)) are Extracellular-facing. Active-site residues include S88 and K142.

Belongs to the peptidase S26 family.

Its subcellular location is the cell membrane. It catalyses the reaction Cleavage of hydrophobic, N-terminal signal or leader sequences from secreted and periplasmic proteins.. In Buchnera aphidicola subsp. Schizaphis graminum (strain Sg), this protein is Signal peptidase I (lepB).